The chain runs to 173 residues: Translation initiation factor IF-3 (173 aa).

The protein belongs to the IF-3 family. In terms of assembly, monomer.

It localises to the cytoplasm. Its function is as follows. IF-3 binds to the 30S ribosomal subunit and shifts the equilibrium between 70S ribosomes and their 50S and 30S subunits in favor of the free subunits, thus enhancing the availability of 30S subunits on which protein synthesis initiation begins. This Caulobacter vibrioides (strain ATCC 19089 / CIP 103742 / CB 15) (Caulobacter crescentus) protein is Translation initiation factor IF-3.